The following is a 200-amino-acid chain: ATP-dependent Clp protease proteolytic subunit (200 aa).

Catalysis depends on Ser98, which acts as the Nucleophile. The active site involves His123.

This sequence belongs to the peptidase S14 family. In terms of assembly, fourteen ClpP subunits assemble into 2 heptameric rings which stack back to back to give a disk-like structure with a central cavity, resembling the structure of eukaryotic proteasomes.

Its subcellular location is the cytoplasm. The enzyme catalyses Hydrolysis of proteins to small peptides in the presence of ATP and magnesium. alpha-casein is the usual test substrate. In the absence of ATP, only oligopeptides shorter than five residues are hydrolyzed (such as succinyl-Leu-Tyr-|-NHMec, and Leu-Tyr-Leu-|-Tyr-Trp, in which cleavage of the -Tyr-|-Leu- and -Tyr-|-Trp bonds also occurs).. Its function is as follows. Cleaves peptides in various proteins in a process that requires ATP hydrolysis. Has a chymotrypsin-like activity. Plays a major role in the degradation of misfolded proteins. The chain is ATP-dependent Clp protease proteolytic subunit from Deinococcus geothermalis (strain DSM 11300 / CIP 105573 / AG-3a).